The primary structure comprises 268 residues: Ribosomal RNA small subunit methyltransferase A (268 aa).

The S-adenosyl-L-methionine site is built by Asn-12, Leu-14, Gly-38, Glu-59, Asp-82, and Asn-107.

The protein belongs to the class I-like SAM-binding methyltransferase superfamily. rRNA adenine N(6)-methyltransferase family. RsmA subfamily.

The protein localises to the cytoplasm. The catalysed reaction is adenosine(1518)/adenosine(1519) in 16S rRNA + 4 S-adenosyl-L-methionine = N(6)-dimethyladenosine(1518)/N(6)-dimethyladenosine(1519) in 16S rRNA + 4 S-adenosyl-L-homocysteine + 4 H(+). Specifically dimethylates two adjacent adenosines (A1518 and A1519) in the loop of a conserved hairpin near the 3'-end of 16S rRNA in the 30S particle. May play a critical role in biogenesis of 30S subunits. The sequence is that of Ribosomal RNA small subunit methyltransferase A from Onion yellows phytoplasma (strain OY-M).